The sequence spans 98 residues: Citrate lyase acyl carrier protein (98 aa).

Residue Ser14 is modified to O-(phosphoribosyl dephospho-coenzyme A)serine.

Belongs to the CitD family. In terms of assembly, oligomer with a subunit composition of (alpha,beta,gamma)6.

Its subcellular location is the cytoplasm. In terms of biological role, covalent carrier of the coenzyme of citrate lyase. The protein is Citrate lyase acyl carrier protein of Vibrio cholerae serotype O1 (strain ATCC 39315 / El Tor Inaba N16961).